A 120-amino-acid chain; its full sequence is Testis-expressed protein 48 (120 aa).

Polar residues predominate over residues 29 to 45 (KVPSQTQEHKPSTQNLL). Positions 29–86 (KVPSQTQEHKPSTQNLLLQKDELDRQNPKRINAVSHLPSRTPLIQTKKSTSSSSSEFE) are disordered. Residues 74–83 (TKKSTSSSSS) show a composition bias toward low complexity.

The sequence is that of Testis-expressed protein 48 from Homo sapiens (Human).